Reading from the N-terminus, the 242-residue chain is Caffeoyl-CoA O-methyltransferase 4 (242 aa).

Residue Lys16 coordinates substrate. S-adenosyl-L-methionine contacts are provided by residues Thr58, Glu80, 82-83, Ser88, Asp106, and Ala135; that span reads GV. Asp158 is a substrate binding site. Asp158 lines the a divalent metal cation pocket. S-adenosyl-L-methionine is bound at residue Asp160. 2 residues coordinate a divalent metal cation: Asp184 and Asn185. A substrate-binding site is contributed by Asn189.

It belongs to the class I-like SAM-binding methyltransferase superfamily. Cation-dependent O-methyltransferase family. CCoAMT subfamily. Requires Mg(2+) as cofactor. Mostly expressed in the bottom and middle parts of the stems.

It carries out the reaction (E)-caffeoyl-CoA + S-adenosyl-L-methionine = (E)-feruloyl-CoA + S-adenosyl-L-homocysteine + H(+). It participates in aromatic compound metabolism; phenylpropanoid biosynthesis. In terms of biological role, methylates caffeoyl-CoA to feruloyl-CoA and 5-hydroxyferuloyl-CoA to sinapoyl-CoA. Plays a role in the synthesis of feruloylated polysaccharides. Involved in the reinforcement of the plant cell wall. Also involved in the responding to wounding or pathogen challenge by the increased formation of cell wall-bound ferulic acid polymers. The protein is Caffeoyl-CoA O-methyltransferase 4 (CCOAOMT4) of Nicotiana tabacum (Common tobacco).